The chain runs to 704 residues: Elongation factor G (704 aa).

The region spanning 8-290 (ARYRNIGISA…AVIDYLPSPV (283 aa)) is the tr-type G domain. GTP-binding positions include 17-24 (AHIDAGKT), 88-92 (DTPGH), and 142-145 (NKMD).

This sequence belongs to the TRAFAC class translation factor GTPase superfamily. Classic translation factor GTPase family. EF-G/EF-2 subfamily.

It localises to the cytoplasm. In terms of biological role, catalyzes the GTP-dependent ribosomal translocation step during translation elongation. During this step, the ribosome changes from the pre-translocational (PRE) to the post-translocational (POST) state as the newly formed A-site-bound peptidyl-tRNA and P-site-bound deacylated tRNA move to the P and E sites, respectively. Catalyzes the coordinated movement of the two tRNA molecules, the mRNA and conformational changes in the ribosome. This is Elongation factor G from Cronobacter sakazakii (strain ATCC BAA-894) (Enterobacter sakazakii).